Here is a 413-residue protein sequence, read N- to C-terminus: Transmembrane protein 237B (413 aa).

The disordered stretch occupies residues 1-162 (MDPEAKVSSS…EDDDVITDPQ (162 aa)). Residues 112–122 (DLVSNGDTLDQ) show a composition bias toward polar residues. 4 helical membrane-spanning segments follow: residues 233–253 (VIGL…IIVV), 274–294 (LAYP…VSAF), 312–332 (LSPV…SLSQ), and 360–380 (ILYP…LAWI).

The protein belongs to the TMEM237 family.

It is found in the membrane. It localises to the cell projection. Its subcellular location is the cilium. Its function is as follows. Component of the transition zone in primary cilia. Required for ciliogenesis. In Danio rerio (Zebrafish), this protein is Transmembrane protein 237B (tmem237b).